Here is a 130-residue protein sequence, read N- to C-terminus: MSVVRSSVHARWIVGKVIGTKMQKTAKVRVTRLVLDPYLLKYFNKRKTYFAHDALQQCTVGDIVLLRALPVPRAKHVKHELAEIVFKVGKVIDPVTGKPCAGTTYLESPLSSETTQLSKNLEELNISSAQ.

Residues 1-20 (MSVVRSSVHARWIVGKVIGT) constitute a mitochondrion transit peptide.

This sequence belongs to the universal ribosomal protein uS17 family. Component of the mitochondrial small ribosomal subunit (mt-SSU). Mature mammalian 55S mitochondrial ribosomes consist of a small (28S) and a large (39S) subunit. The 28S small subunit contains a 12S ribosomal RNA (12S mt-rRNA) and 30 different proteins. The 39S large subunit contains a 16S rRNA (16S mt-rRNA), a copy of mitochondrial valine transfer RNA (mt-tRNA(Val)), which plays an integral structural role, and 52 different proteins.

It is found in the mitochondrion. This Homo sapiens (Human) protein is Small ribosomal subunit protein uS17m (MRPS17).